Here is a 224-residue protein sequence, read N- to C-terminus: tRNA (guanine-N(7)-)-methyltransferase (224 aa).

S-adenosyl-L-methionine-binding residues include E57, D82, and D109. D167 contacts substrate.

It belongs to the class I-like SAM-binding methyltransferase superfamily. TrmB family.

The enzyme catalyses guanosine(46) in tRNA + S-adenosyl-L-methionine = N(7)-methylguanosine(46) in tRNA + S-adenosyl-L-homocysteine. Its pathway is tRNA modification; N(7)-methylguanine-tRNA biosynthesis. In terms of biological role, catalyzes the formation of N(7)-methylguanine at position 46 (m7G46) in tRNA. The chain is tRNA (guanine-N(7)-)-methyltransferase from Chloroflexus aggregans (strain MD-66 / DSM 9485).